Reading from the N-terminus, the 136-residue chain is Large ribosomal subunit protein uL16 (136 aa).

Belongs to the universal ribosomal protein uL16 family. Part of the 50S ribosomal subunit.

Its function is as follows. Binds 23S rRNA and is also seen to make contacts with the A and possibly P site tRNAs. The sequence is that of Large ribosomal subunit protein uL16 from Salmonella agona (strain SL483).